Consider the following 372-residue polypeptide: Lipoyl synthase, mitochondrial (372 aa).

[4Fe-4S] cluster-binding residues include Cys106, Cys111, Cys117, Cys137, Cys141, Cys144, and Ser352. Residues 122-341 (EYGTATATIM…EKAGNELGFL (220 aa)) enclose the Radical SAM core domain.

It belongs to the radical SAM superfamily. Lipoyl synthase family. [4Fe-4S] cluster is required as a cofactor.

The protein resides in the mitochondrion. The enzyme catalyses [[Fe-S] cluster scaffold protein carrying a second [4Fe-4S](2+) cluster] + N(6)-octanoyl-L-lysyl-[protein] + 2 oxidized [2Fe-2S]-[ferredoxin] + 2 S-adenosyl-L-methionine + 4 H(+) = [[Fe-S] cluster scaffold protein] + N(6)-[(R)-dihydrolipoyl]-L-lysyl-[protein] + 4 Fe(3+) + 2 hydrogen sulfide + 2 5'-deoxyadenosine + 2 L-methionine + 2 reduced [2Fe-2S]-[ferredoxin]. It participates in protein modification; protein lipoylation via endogenous pathway; protein N(6)-(lipoyl)lysine from octanoyl-[acyl-carrier-protein]: step 2/2. Catalyzes the radical-mediated insertion of two sulfur atoms into the C-6 and C-8 positions of the octanoyl moiety bound to the lipoyl domains of lipoate-dependent enzymes, thereby converting the octanoylated domains into lipoylated derivatives. The protein is Lipoyl synthase, mitochondrial (lias) of Xenopus laevis (African clawed frog).